The following is a 274-amino-acid chain: Serine acetyltransferase (274 aa).

Belongs to the transferase hexapeptide repeat family.

The protein localises to the cytoplasm. It carries out the reaction L-serine + acetyl-CoA = O-acetyl-L-serine + CoA. It functions in the pathway amino-acid biosynthesis; L-cysteine biosynthesis; L-cysteine from L-serine: step 1/2. The polypeptide is Serine acetyltransferase (cysE) (Buchnera aphidicola subsp. Acyrthosiphon pisum (strain APS) (Acyrthosiphon pisum symbiotic bacterium)).